A 582-amino-acid polypeptide reads, in one-letter code: MNKLIAWIEKGKPFFEKISRNIYLRAIRDGFIAAIPIILFSSIFILITYVPNVFGFTWSKTMEGILMKPYNYTMGIVGLLVAGTTAKSLTDSYNRKLDKTNQINFISTMMAAICGFLFLAADPVKDGGFSSAFMGTKGLLTAFISAFITVIVYNFFVKRNITIKMPKEVPPNISQVFKDIFPLSAVILILYALDLLSRAIVHTNVANAVLKVFEPLFTAADGWIGVTLIFGAFAFFWFVGIHGPSIVEPAIAAITYANLETNLHLIQAGEHADKVITPGTQMFVATMGGTGATLVVPFMFMWLTKSKRNKAIGRASVVPTFFGVNEPILFGAPLVLNPVFFIPFIFAPIVNIWIFKFFVDVLNMNSFSIFLPWTTPGPLGIVMGTGFAFWSFVLAILLIVVDVIIYYPFLKVYDEQVLEEELGNKEANNELKEKVSANFDTKKADAILATAGASEADTDDTSSVDETTSTSSTDTISEQTNVLVLCAGGGTSGLLANALNKAAEEYEVPVKAAAGGYGAHMDIMKDYQLIILAPQVASNFEDIKQDTDRLGIKLAKTEGAQYIKLTRDGEAALEFVKQQFNN.

The PTS EIIC type-3 domain maps to isoleucine 8–phenylalanine 409. The next 9 membrane-spanning stretches (helical) occupy residues glycine 30 to valine 50, glycine 64 to threonine 84, isoleucine 103 to proline 123, lysine 137 to valine 157, valine 176 to leucine 196, glycine 222 to histidine 242, phenylalanine 283 to leucine 303, valine 339 to valine 359, and isoleucine 381 to valine 401. A disordered region spans residues alanine 453–threonine 473. A compositionally biased stretch (low complexity) spans valine 464–threonine 473. The region spanning glutamine 479–asparagine 582 is the PTS EIIB type-3 domain. Cysteine 486 acts as the Phosphocysteine intermediate; for EIIB activity in catalysis. The residue at position 486 (cysteine 486) is a Phosphocysteine; by EIIA.

Its subcellular location is the cell membrane. It carries out the reaction lactose(out) + N(pros)-phospho-L-histidyl-[protein] = lactose 6-phosphate(in) + L-histidyl-[protein]. In terms of biological role, the phosphoenolpyruvate-dependent sugar phosphotransferase system (sugar PTS), a major carbohydrate active transport system, catalyzes the phosphorylation of incoming sugar substrates concomitantly with their translocation across the cell membrane. The enzyme II LacEF PTS system is involved in lactose transport. This is PTS system lactose-specific EIICB component from Staphylococcus epidermidis (strain ATCC 35984 / DSM 28319 / BCRC 17069 / CCUG 31568 / BM 3577 / RP62A).